A 132-amino-acid chain; its full sequence is ATP synthase epsilon chain (132 aa).

It belongs to the ATPase epsilon chain family. As to quaternary structure, F-type ATPases have 2 components, CF(1) - the catalytic core - and CF(0) - the membrane proton channel. CF(1) has five subunits: alpha(3), beta(3), gamma(1), delta(1), epsilon(1). CF(0) has three main subunits: a, b and c.

It localises to the cell inner membrane. Functionally, produces ATP from ADP in the presence of a proton gradient across the membrane. The protein is ATP synthase epsilon chain of Anaeromyxobacter sp. (strain Fw109-5).